A 156-amino-acid chain; its full sequence is FAD synthase (156 aa).

ATP is bound by residues 16–17 (TF), 21–24 (HPGH), Asp101, and Tyr129.

The protein belongs to the archaeal FAD synthase family. As to quaternary structure, homodimer. It depends on a divalent metal cation as a cofactor.

It carries out the reaction FMN + ATP + H(+) = FAD + diphosphate. Its pathway is cofactor biosynthesis; FAD biosynthesis; FAD from FMN: step 1/1. Functionally, catalyzes the transfer of the AMP portion of ATP to flavin mononucleotide (FMN) to produce flavin adenine dinucleotide (FAD) coenzyme. The sequence is that of FAD synthase from Methanococcus aeolicus (strain ATCC BAA-1280 / DSM 17508 / OCM 812 / Nankai-3).